A 280-amino-acid chain; its full sequence is Ribosomal RNA-processing protein 7 homolog A (280 aa).

Residues R59–Y159 enclose the RRM domain. S99 bears the Phosphoserine mark.

Belongs to the RRP7 family. As to quaternary structure, part of the small subunit (SSU) processome, composed of more than 70 proteins and the RNA chaperone small nucleolar RNA (snoRNA) U3. Interacts with NOL6; required for NOL6 localization to nucleolus. In terms of tissue distribution, expressed in the apical radial glial cells in the developing brain.

The protein localises to the nucleus. Its subcellular location is the nucleolus. It localises to the cell projection. The protein resides in the cilium. It is found in the cytoplasm. The protein localises to the cytoskeleton. Its subcellular location is the microtubule organizing center. It localises to the centrosome. In terms of biological role, nucleolar protein that is involved in ribosomal RNA (rRNA) processing. Also plays a role in primary cilia resorption, and cell cycle progression in neurogenesis and neocortex development. Part of the small subunit (SSU) processome, first precursor of the small eukaryotic ribosomal subunit. During the assembly of the SSU processome in the nucleolus, many ribosome biogenesis factors, an RNA chaperone and ribosomal proteins associate with the nascent pre-rRNA and work in concert to generate RNA folding, modifications, rearrangements and cleavage as well as targeted degradation of pre-ribosomal RNA by the RNA exosome. This chain is Ribosomal RNA-processing protein 7 homolog A, found in Homo sapiens (Human).